We begin with the raw amino-acid sequence, 350 residues long: D-alanine--D-alanine ligase (350 aa).

The 202-residue stretch at 133–334 (NDIFELNKIP…VSEVFDNLIG (202 aa)) folds into the ATP-grasp domain. 161–216 (FEKTSKAVYVKPCNAGSSVGVMRAETEEELEKAIQNAFQYDRRILVEEEIIGPELQ) provides a ligand contact to ATP. Mg(2+) is bound by residues Asp288, Glu300, and Asn302.

This sequence belongs to the D-alanine--D-alanine ligase family. Mg(2+) serves as cofactor. It depends on Mn(2+) as a cofactor.

The protein localises to the cytoplasm. It carries out the reaction 2 D-alanine + ATP = D-alanyl-D-alanine + ADP + phosphate + H(+). The protein operates within cell wall biogenesis; peptidoglycan biosynthesis. Its function is as follows. Cell wall formation. The protein is D-alanine--D-alanine ligase of Finegoldia magna (strain ATCC 29328 / DSM 20472 / WAL 2508) (Peptostreptococcus magnus).